The chain runs to 94 residues: Large ribosomal subunit protein uL23 (94 aa).

The protein belongs to the universal ribosomal protein uL23 family. In terms of assembly, part of the 50S ribosomal subunit. Contacts protein L29, and trigger factor when it is bound to the ribosome.

Its function is as follows. One of the early assembly proteins it binds 23S rRNA. One of the proteins that surrounds the polypeptide exit tunnel on the outside of the ribosome. Forms the main docking site for trigger factor binding to the ribosome. The protein is Large ribosomal subunit protein uL23 of Dehalococcoides mccartyi (strain ATCC BAA-2266 / KCTC 15142 / 195) (Dehalococcoides ethenogenes (strain 195)).